Reading from the N-terminus, the 1015-residue chain is Fibronectin-binding protein A (1015 aa).

Positions 1-36 are cleaved as a signal peptide; it reads MKNNLRYGIRKHKLGAASVFLGTMIVVGMGQDKEAA. Residues 7-18 carry the YSIRK-G/S signaling motif motif; sequence YGIRKHKLGAAS. The tract at residues 37-512 is ligand-binding A region; that stretch reads ASEQKTTTVE…SNKADGNGKN (476 aa). A compositionally biased stretch (polar residues) spans 75 to 92; that stretch reads SYSATATEQPSNATQVTT. The disordered stretch occupies residues 75–199; sequence SYSATATEQP…KVETGTDVTS (125 aa). Over residues 112–126 the composition is skewed to basic and acidic residues; it reads TVKEEVVKEEAKPQV. The segment covering 129 to 139 has biased composition (polar residues); the sequence is TTQSQDNSGDQ. Positions 179-193 are enriched in basic and acidic residues; the sequence is DVVEAKEASDEKVET. The interval 194–512 is fibrinogen/elastin/tropoelastin-binding; the sequence is GTDVTSKVTV…SNKADGNGKN (319 aa). The segment at 513 to 873 is fibronectin-binding; sequence GQIIQNNDFE…EGQQTIEEDT (361 aa). A B-1 repeat occupies 546 to 575; sequence ENQDNTPLDIDYHTAIDGEGGYVDGYIETI. The 2 X approximate tandem repeats stretch occupies residues 546–605; the sequence is ENQDNTPLDIDYHTAIDGEGGYVDGYIETIEETDSSAIDIDYHTAVDSEAGHVGGYTESS. The B-2 repeat unit spans residues 576 to 605; sequence EETDSSAIDIDYHTAVDSEAGHVGGYTESS. 4 disordered regions span residues 596–623, 741–815, 828–953, and 966–992; these read GHVG…NSKH, LGYE…IDFD, EIIE…GKVV, and VAPT…NKGM. The stretch at 746 to 783 is one D-1 repeat; sequence GQNSGNQSFEEDTEEDKPKYEQGGNIVDIDFDSVPQIQ. The segment at 746–875 is 4 X approximate tandem repeats; the sequence is GQNSGNQSFE…QQTIEEDTTP (130 aa). Residues 780 to 791 show a composition bias toward polar residues; that stretch reads PQIQGQNNGNQS. The D-2 repeat unit spans residues 784-821; sequence GQNNGNQSFEEDTEKDKPKYEQGGNIIDIDFDSVPQIH. The stretch at 822–860 is one D-3 repeat; sequence GFNKHTEIIEEDTNKDKPNYQFGGHNSVDFEEDTLPKVS. Basic and acidic residues predominate over residues 828 to 839; it reads EIIEEDTNKDKP. The stretch at 861-875 is one D-4; truncated repeat; it reads GQNEGQQTIEEDTTP. The span at 875–935 shows a compositional bias: pro residues; that stretch reads PPTPPTPEVP…PAEPGKPVPP (61 aa). 5 WR repeats span residues 876–889, 890–903, 904–917, 918–931, and 932–945; these read PTPP…EPET, PTPP…EPGK, and PVPP…KPSK. Positions 876 to 945 are 5 X tandem repeats, Pro-rich (WR); the sequence is PTPPTPEVPS…AKEEPKKPSK (70 aa). The LPXTG sorting signal motif lies at 979–983; it reads LPETG. Thr-982 is modified (pentaglycyl murein peptidoglycan amidated threonine). Residues 983–1015 constitute a propeptide, removed by sortase; that stretch reads GGEESTNKGMLFGGLFSILGLALLRRNKKNNKA.

The protein localises to the secreted. Its subcellular location is the cell wall. Its function is as follows. Promotes bacterial attachment to multiple substrates, such as fibronectin (Fn), fibrinogen (Fg), elastin peptides and tropoelastin. This confers to S.aureus the ability to invade endothelial cells. Promotes adherence to and aggregation of activated platelets. In Staphylococcus aureus (strain MSSA476), this protein is Fibronectin-binding protein A (fnbA).